Reading from the N-terminus, the 495-residue chain is DNA double-strand break repair helicase HerA (495 aa).

Residues R141, 150 to 155 (GSGKSN), and 458 to 459 (KI) contribute to the ATP site.

Belongs to the HerA family. As to quaternary structure, forms a hexamer or a heptamer. Interacts with Mre11.

It catalyses the reaction Couples ATP hydrolysis with the unwinding of duplex DNA at the replication fork by translocating in the 5'-3' direction. This creates two antiparallel DNA single strands (ssDNA). The leading ssDNA polymer is the template for DNA polymerase III holoenzyme which synthesizes a continuous strand.. It carries out the reaction ATP + H2O = ADP + phosphate + H(+). The catalysed reaction is Couples ATP hydrolysis with the unwinding of duplex DNA by translocating in the 3'-5' direction.. ATPase activity is slightly stimulated by either circular single- or double-stranded (ds)DNA with a weak preference for dsDNA. Helicase activity is stimulated by Mre11. In terms of biological role, involved in DNA double-strand break (DSB) repair. Probably acts with NurA to stimulate resection of the 5' strand and produce the long 3' single-strand that is required for RadA loading. Has DNA-dependent ATPase activity and bidirectional DNA helicase activity. Loads on either a 3' or a 5' DNA tail for subsequent DNA unwinding. Can also unwind blunt-ended dsDNA, Holliday junction and splayed-arm DNA. This Sulfurisphaera tokodaii (strain DSM 16993 / JCM 10545 / NBRC 100140 / 7) (Sulfolobus tokodaii) protein is DNA double-strand break repair helicase HerA.